We begin with the raw amino-acid sequence, 313 residues long: Homoserine O-succinyltransferase (313 aa).

Cys142 functions as the Acyl-thioester intermediate in the catalytic mechanism. Positions 163 and 192 each coordinate substrate. His235 acts as the Proton acceptor in catalysis. The active site involves Glu237. Position 249 (Arg249) interacts with substrate.

It belongs to the MetA family.

The protein resides in the cytoplasm. It carries out the reaction L-homoserine + succinyl-CoA = O-succinyl-L-homoserine + CoA. The protein operates within amino-acid biosynthesis; L-methionine biosynthesis via de novo pathway; O-succinyl-L-homoserine from L-homoserine: step 1/1. Transfers a succinyl group from succinyl-CoA to L-homoserine, forming succinyl-L-homoserine. In Shewanella oneidensis (strain ATCC 700550 / JCM 31522 / CIP 106686 / LMG 19005 / NCIMB 14063 / MR-1), this protein is Homoserine O-succinyltransferase.